The primary structure comprises 61 residues: Large ribosomal subunit protein uL30 (61 aa).

The protein belongs to the universal ribosomal protein uL30 family. Part of the 50S ribosomal subunit.

This chain is Large ribosomal subunit protein uL30, found in Chromobacterium violaceum (strain ATCC 12472 / DSM 30191 / JCM 1249 / CCUG 213 / NBRC 12614 / NCIMB 9131 / NCTC 9757 / MK).